The sequence spans 197 residues: Phosphoheptose isomerase (197 aa).

Positions 36–197 constitute an SIS domain; that stretch reads MVNALLNEGK…IDSQLFGSEE (162 aa). 51–53 is a binding site for substrate; sequence NGG. Positions 60 and 64 each coordinate Zn(2+). Substrate-binding positions include glutamate 64, 93–94, 119–121, serine 124, and glutamine 174; these read ND and STS. Residues glutamine 174 and histidine 182 each coordinate Zn(2+).

The protein belongs to the SIS family. GmhA subfamily. As to quaternary structure, homotetramer. Requires Zn(2+) as cofactor.

The protein localises to the cytoplasm. The enzyme catalyses 2 D-sedoheptulose 7-phosphate = D-glycero-alpha-D-manno-heptose 7-phosphate + D-glycero-beta-D-manno-heptose 7-phosphate. Its pathway is carbohydrate biosynthesis; D-glycero-D-manno-heptose 7-phosphate biosynthesis; D-glycero-alpha-D-manno-heptose 7-phosphate and D-glycero-beta-D-manno-heptose 7-phosphate from sedoheptulose 7-phosphate: step 1/1. In terms of biological role, catalyzes the isomerization of sedoheptulose 7-phosphate in D-glycero-D-manno-heptose 7-phosphate. The chain is Phosphoheptose isomerase from Pseudomonas putida (strain W619).